We begin with the raw amino-acid sequence, 124 residues long: Large ribosomal subunit protein bL12 (124 aa).

The protein belongs to the bacterial ribosomal protein bL12 family. As to quaternary structure, homodimer. Part of the ribosomal stalk of the 50S ribosomal subunit. Forms a multimeric L10(L12)X complex, where L10 forms an elongated spine to which 2 to 4 L12 dimers bind in a sequential fashion. Binds GTP-bound translation factors.

Its function is as follows. Forms part of the ribosomal stalk which helps the ribosome interact with GTP-bound translation factors. Is thus essential for accurate translation. This is Large ribosomal subunit protein bL12 from Burkholderia cenocepacia (strain HI2424).